The following is a 303-amino-acid chain: MSDIDQWIETLKNGENLKETDVKILCNKAKDILNNEDNVIRVEAPVTICGDIHGQFYDLMELFKVGGDVPETNYLFLGDFVDRGYNSVETFLLLLALKVRYPDQITLIRGNHESRQITQVYGFYDECLRKYSTLNVWKYCTEVFDYLALAAVVNDNIFCVHGGLSPYIKTIDEIRIINRKQEVPHEGVMCDLMWSDPDEIEGWSQSARGAGFVFGADVVKEFNRRNGISLICRAHQLAMEGFKLMFDNSLVTVWSAPNYCYRCGNVASILELDENLKKYYKLFEAAPTDRAQNSKKVIADYFL.

Mn(2+) is bound by residues aspartate 51, histidine 53, aspartate 79, and asparagine 111. Histidine 112 (proton donor) is an active-site residue. Mn(2+) is bound by residues histidine 161 and histidine 235.

It belongs to the PPP phosphatase family. PP-4 (PP-X) subfamily. Mn(2+) serves as cofactor.

The catalysed reaction is O-phospho-L-seryl-[protein] + H2O = L-seryl-[protein] + phosphate. It carries out the reaction O-phospho-L-threonyl-[protein] + H2O = L-threonyl-[protein] + phosphate. The chain is Serine/threonine-protein phosphatase PP-X homolog 1 (Ppx1) from Paramecium tetraurelia.